A 108-amino-acid polypeptide reads, in one-letter code: UPF0060 membrane protein Spro_2289 (108 aa).

The next 4 membrane-spanning stretches (helical) occupy residues 6 to 26 (LLFF…YLWL), 31 to 51 (SAWL…LLTL), 61 to 81 (AAYG…VDGV), and 85 to 105 (ALDW…VSGW).

The protein belongs to the UPF0060 family.

Its subcellular location is the cell inner membrane. The polypeptide is UPF0060 membrane protein Spro_2289 (Serratia proteamaculans (strain 568)).